Reading from the N-terminus, the 202-residue chain is MCRTLAAFPTTCLERAKEFKTRLGIFLHKSELGCDTGSTGKFEWGSKHSKENRNFSEDVLGWRESFDLLLSSKNGVAAFHAFLKTEFSEENLEFWLACEEFKKIRSATKLASRAHQIFEEFICSEAPKEVNIDHETHELTRMNLQTATATCFDAAQGKTRTLMEKDSYPRFLKSPAYRDLAAQASAASATLSSCSLDEPSHT.

Residues Cys2 and Cys12 are each lipidated (S-palmitoyl cysteine). Residues 65–181 (SFDLLLSSKN…LKSPAYRDLA (117 aa)) form the RGS domain. Phosphotyrosine; by EGFR is present on Tyr168. Tyr177 carries the post-translational modification Phosphotyrosine.

In terms of assembly, interacts with GNAI1 and GNAQ. Interacts with GNAI2, GNAI3 and GNAO1. Post-translationally, palmitoylated on Cys-2 and/or Cys-12. In terms of processing, phosphorylated. Phosphorylation at Tyr-168 by EGFR enhances GTPase accelerating (GAP) activity toward GNAI1. Abundantly expressed in retina with lower levels of expression in most other tissues.

It is found in the membrane. Regulates G protein-coupled receptor signaling cascades. Inhibits signal transduction by increasing the GTPase activity of G protein alpha subunits, thereby driving them into their inactive GDP-bound form. Plays an important role in the phototransduction cascade by regulating the lifetime and effective concentration of activated transducin alpha. May regulate extra and intracellular mitogenic signals. This Homo sapiens (Human) protein is Regulator of G-protein signaling 16 (RGS16).